The primary structure comprises 196 residues: Molybdenum cofactor guanylyltransferase (196 aa).

Residues 10–12 (LAG), K23, N51, D69, and D99 contribute to the GTP site. Residue D99 coordinates Mg(2+).

The protein belongs to the MobA family. In terms of assembly, monomer. Mg(2+) is required as a cofactor.

It localises to the cytoplasm. It catalyses the reaction Mo-molybdopterin + GTP + H(+) = Mo-molybdopterin guanine dinucleotide + diphosphate. In terms of biological role, transfers a GMP moiety from GTP to Mo-molybdopterin (Mo-MPT) cofactor (Moco or molybdenum cofactor) to form Mo-molybdopterin guanine dinucleotide (Mo-MGD) cofactor. The protein is Molybdenum cofactor guanylyltransferase of Shewanella sediminis (strain HAW-EB3).